Consider the following 381-residue polypeptide: L-lactate dehydrogenase (381 aa).

In terms of domain architecture, FMN hydroxy acid dehydrogenase spans 1–380 (MIISASTDYR…SADSLVRELG (380 aa)). Tyr24 is a substrate binding site. 2 residues coordinate FMN: Ser106 and Gln127. Residue Tyr129 coordinates substrate. Thr155 contacts FMN. Residue Arg164 participates in substrate binding. Lys251 contacts FMN. His275 (proton acceptor) is an active-site residue. Substrate is bound at residue Arg278. Position 306–330 (306–330 (DSGIRTGLDVVRMIALGADSVLLGR)) interacts with FMN.

It belongs to the FMN-dependent alpha-hydroxy acid dehydrogenase family. In terms of assembly, homotetramer. Requires FMN as cofactor.

It localises to the cell inner membrane. It catalyses the reaction (S)-lactate + A = pyruvate + AH2. Its function is as follows. Catalyzes the conversion of L-lactate to pyruvate. Is coupled to the respiratory chain. This Pseudomonas paraeruginosa (strain DSM 24068 / PA7) (Pseudomonas aeruginosa (strain PA7)) protein is L-lactate dehydrogenase.